The sequence spans 363 residues: GTP-binding protein 1 (363 aa).

One can recognise an OBG-type G domain in the interval 63 to 287; sequence ARVAFIGFPS…LKERIWEELN (225 aa). Residues 69–76, 115–119, and 246–249 each bind GTP; these read GFPSVGKS, DLPGI, and KIDA. One can recognise a TGS domain in the interval 287 to 362; that stretch reads NLYRIYTKRK…EEGDVVTIVT (76 aa).

This sequence belongs to the TRAFAC class OBG-HflX-like GTPase superfamily. OBG GTPase family.

The polypeptide is GTP-binding protein 1 (gtp1) (Schizosaccharomyces pombe (strain 972 / ATCC 24843) (Fission yeast)).